The chain runs to 416 residues: Calreticulin (416 aa).

The N-linked (GlcNAc...) asparagine glycan is linked to Asn54. The cysteines at positions 108 and 140 are disulfide-linked. Tyr112, Lys114, Tyr131, and Asp138 together coordinate an alpha-D-glucoside. A run of 7 repeats spans residues 194–205 (KQSGSVYTDWDI), 213–224 (DPEAKKPEDWED), 230–241 (DPEDKKPEGYDD), 248–259 (DPEAKKPEDWDD), 263–273 (GEWTAPTIPNP), 277–287 (GEWKPKKIKNP), and 291–301 (GKWKAPMIDNP). Positions 194 to 259 (KQSGSVYTDW…EAKKPEDWDD (66 aa)) are 4 X approximate repeats. The interval 209–281 (KQIKDPEAKK…NPDYKGEWKP (73 aa)) is disordered. The segment covering 210–255 (QIKDPEAKKPEDWEDKEYIPDPEDKKPEGYDDIPKEITDPEAKKPE) has biased composition (basic and acidic residues). Residues 263–301 (GEWTAPTIPNPDYKGEWKPKKIKNPNFKGKWKAPMIDNP) are 3 X approximate repeats. Residue Glu321 coordinates an alpha-D-glucoside. The segment covering 349–378 (ETWGKNKDAEKAAFDEAEKKKEEEEAKDDP) has biased composition (basic and acidic residues). The segment at 349–416 (ETWGKNKDAE…EDDEDVHDEL (68 aa)) is disordered. The segment covering 379–416 (TESDDEKPDEEGESDGEGDDESKDIDNEEDDEDVHDEL) has biased composition (acidic residues). The short motif at 413–416 (HDEL) is the Prevents secretion from ER element.

It belongs to the calreticulin family.

The protein localises to the endoplasmic reticulum lumen. Its function is as follows. Molecular calcium-binding chaperone promoting folding, oligomeric assembly and quality control in the ER via the calreticulin/calnexin cycle. This lectin may interact transiently with almost all of the monoglucosylated glycoproteins that are synthesized in the ER. This chain is Calreticulin, found in Berberis stolonifera (Barberry).